The primary structure comprises 382 residues: 4-hydroxybutyrate dehydrogenase (382 aa).

NAD(+)-binding positions include Asp37, Asn67, 94 to 98 (GSSID), 138 to 142 (TTSGT), and Lys159. Positions 193, 197, 261, and 280 each coordinate Fe cation. His280 lines the NAD(+) pocket.

The protein belongs to the iron-containing alcohol dehydrogenase family. The cofactor is Fe cation.

The catalysed reaction is 4-hydroxybutanoate + NAD(+) = succinate semialdehyde + NADH + H(+). Its activity is regulated as follows. Shows competitive inhibition of GHBDH activity by the product succinic semialdehyde, and non-competitive inhibitions by the three other substrate-product combinations. The conversion of GHB to SSA is activated by two different saturating purified nudix hydrolases, B.methanolicus activator ACT and E.coli NudF. The nudix hydrolases do not activate the reverse reaction. In terms of biological role, involved in the degradation of 4-hydroxybutyrate. Catalyzes the interconversion of gamma-hydroxybutyrate (GHB) and succinic semialdehyde (SSA). The sequence is that of 4-hydroxybutyrate dehydrogenase from Cupriavidus necator (Alcaligenes eutrophus).